The following is a 404-amino-acid chain: Cysteine desulfurase IscS (404 aa).

Residues 75–76 (AT), Asn155, Gln183, and 203–205 (SGH) each bind pyridoxal 5'-phosphate. Residue Lys206 is modified to N6-(pyridoxal phosphate)lysine. Pyridoxal 5'-phosphate is bound at residue Thr243. Cys328 serves as the catalytic Cysteine persulfide intermediate. [2Fe-2S] cluster is bound at residue Cys328.

The protein belongs to the class-V pyridoxal-phosphate-dependent aminotransferase family. NifS/IscS subfamily. As to quaternary structure, homodimer. Forms a heterotetramer with IscU, interacts with other sulfur acceptors. It depends on pyridoxal 5'-phosphate as a cofactor.

It is found in the cytoplasm. The enzyme catalyses (sulfur carrier)-H + L-cysteine = (sulfur carrier)-SH + L-alanine. It functions in the pathway cofactor biosynthesis; iron-sulfur cluster biosynthesis. Its function is as follows. Master enzyme that delivers sulfur to a number of partners involved in Fe-S cluster assembly, tRNA modification or cofactor biosynthesis. Catalyzes the removal of elemental sulfur and selenium atoms from cysteine and selenocysteine to produce alanine. Functions as a sulfur delivery protein for Fe-S cluster synthesis onto IscU, an Fe-S scaffold assembly protein, as well as other S acceptor proteins. Also functions as a selenium delivery protein in the pathway for the biosynthesis of selenophosphate. The sequence is that of Cysteine desulfurase IscS from Salmonella arizonae (strain ATCC BAA-731 / CDC346-86 / RSK2980).